Reading from the N-terminus, the 369-residue chain is FAD-dependent monooxygenase FPY4 (369 aa).

This sequence belongs to the aromatic-ring hydroxylase family. The cofactor is FAD.

Its pathway is secondary metabolite biosynthesis. FAD-dependent monooxygenase; part of the gene cluster that mediates the biosynthesis of the gamma-pyrones fusapyrone (FPY) and deoxyfusapyrone (dFPY). FPY is an undecaketide and thus likely synthesized by the polyketide synthase FPY1 from acetyl-CoA functioning as starter unit and the addition of 10 malonyl-CoA extender units by successive Claisen-condensations. Next to this, FPY shares some rare features: C-glycosylated 4-deoxyglucose at C-3, a gem-dimethyl group at C-13, and an alpha-beta to beta-gamma double bond shift at C-20. During FPY biosynthesis mono-C-methyl groups are transferred to the tetra-, penta-, hexa- and heptaketide, while two C-methyl groups are transferred to the nonaketide, suggesting that the CMet domain is programmed to selectively catalyze two successive C-alpha-methylation reactions of the nonaketide, while other alpha-carbons are non- or mono-methylated only. While the origin of the 4'-deoxyglucose moiety remains opaque, its transfer to C-3 is most likely mediated by the C-glycosyltransferase FPY2. Next to this, the hydroxyl group present at C-33 and discriminating between FPY and dFPY, is likely to be installed by the cytochrome P450 monooxygenase FPY7. No putative function can be predicted for the remaining genes FPY3-FPY6. This chain is FAD-dependent monooxygenase FPY4, found in Fusarium mangiferae (Mango malformation disease fungus).